The primary structure comprises 154 residues: Deoxyuridine 5'-triphosphate nucleotidohydrolase (154 aa).

Residues 68–70 (RSG), Asn81, and 85–87 (TID) contribute to the substrate site.

The protein belongs to the dUTPase family. Mg(2+) serves as cofactor.

The catalysed reaction is dUTP + H2O = dUMP + diphosphate + H(+). Its pathway is pyrimidine metabolism; dUMP biosynthesis; dUMP from dCTP (dUTP route): step 2/2. This enzyme is involved in nucleotide metabolism: it produces dUMP, the immediate precursor of thymidine nucleotides and it decreases the intracellular concentration of dUTP so that uracil cannot be incorporated into DNA. The chain is Deoxyuridine 5'-triphosphate nucleotidohydrolase from Acidiphilium cryptum (strain JF-5).